The chain runs to 278 residues: Tryptophan synthase alpha chain (278 aa).

Residues Glu-50 and Asp-61 each act as proton acceptor in the active site.

This sequence belongs to the TrpA family. As to quaternary structure, tetramer of two alpha and two beta chains.

It carries out the reaction (1S,2R)-1-C-(indol-3-yl)glycerol 3-phosphate + L-serine = D-glyceraldehyde 3-phosphate + L-tryptophan + H2O. Its pathway is amino-acid biosynthesis; L-tryptophan biosynthesis; L-tryptophan from chorismate: step 5/5. Functionally, the alpha subunit is responsible for the aldol cleavage of indoleglycerol phosphate to indole and glyceraldehyde 3-phosphate. This chain is Tryptophan synthase alpha chain, found in Methylorubrum populi (strain ATCC BAA-705 / NCIMB 13946 / BJ001) (Methylobacterium populi).